An 87-amino-acid polypeptide reads, in one-letter code: Small ribosomal subunit protein uS17 (87 aa).

It belongs to the universal ribosomal protein uS17 family. As to quaternary structure, part of the 30S ribosomal subunit.

Its function is as follows. One of the primary rRNA binding proteins, it binds specifically to the 5'-end of 16S ribosomal RNA. In Aster yellows witches'-broom phytoplasma (strain AYWB), this protein is Small ribosomal subunit protein uS17.